We begin with the raw amino-acid sequence, 141 residues long: Large ribosomal subunit protein uL11 (141 aa).

The protein belongs to the universal ribosomal protein uL11 family. As to quaternary structure, part of the ribosomal stalk of the 50S ribosomal subunit. Interacts with L10 and the large rRNA to form the base of the stalk. L10 forms an elongated spine to which L12 dimers bind in a sequential fashion forming a multimeric L10(L12)X complex. Post-translationally, one or more lysine residues are methylated.

In terms of biological role, forms part of the ribosomal stalk which helps the ribosome interact with GTP-bound translation factors. The protein is Large ribosomal subunit protein uL11 of Nostoc sp. (strain PCC 7120 / SAG 25.82 / UTEX 2576).